The following is a 234-amino-acid chain: Probable flavin reductase (234 aa).

A pyridine-binding site is contributed by 112-116 (GGTGL).

It belongs to the Fre/LuxG FAD/NAD(P) flavoprotein oxidoreductase family.

Its function is as follows. Probable flavin reductase in the luminescent systems of different marine bacteria. This Photobacterium leiognathi protein is Probable flavin reductase (luxG).